The primary structure comprises 828 residues: Glycerol-3-phosphate acyltransferase (828 aa).

An HXXXXD motif motif is present at residues 309–314 (CHRSHI).

Belongs to the GPAT/DAPAT family.

It is found in the cell inner membrane. The enzyme catalyses sn-glycerol 3-phosphate + an acyl-CoA = a 1-acyl-sn-glycero-3-phosphate + CoA. The protein operates within phospholipid metabolism; CDP-diacylglycerol biosynthesis; CDP-diacylglycerol from sn-glycerol 3-phosphate: step 1/3. The protein is Glycerol-3-phosphate acyltransferase of Pseudomonas entomophila (strain L48).